Here is a 226-residue protein sequence, read N- to C-terminus: ATP-dependent dethiobiotin synthetase BioD (226 aa).

Position 14-19 (G14–F19) interacts with ATP. Position 18 (T18) interacts with Mg(2+). K39 is a catalytic residue. S43 lines the substrate pocket. ATP is bound by residues D56, E117–G120, N177–T178, P206–I208, and N213. 2 residues coordinate Mg(2+): D56 and E117.

Belongs to the dethiobiotin synthetase family. Homodimer. It depends on Mg(2+) as a cofactor.

It is found in the cytoplasm. It carries out the reaction (7R,8S)-7,8-diammoniononanoate + CO2 + ATP = (4R,5S)-dethiobiotin + ADP + phosphate + 3 H(+). It functions in the pathway cofactor biosynthesis; biotin biosynthesis; biotin from 7,8-diaminononanoate: step 1/2. Catalyzes a mechanistically unusual reaction, the ATP-dependent insertion of CO2 between the N7 and N8 nitrogen atoms of 7,8-diaminopelargonic acid (DAPA, also called 7,8-diammoniononanoate) to form a ureido ring. This Xylella fastidiosa (strain Temecula1 / ATCC 700964) protein is ATP-dependent dethiobiotin synthetase BioD.